The following is a 173-amino-acid chain: Ribosome maturation factor RimM (173 aa).

One can recognise a PRC barrel domain in the interval 92–165; it reads EDEYYHTDLI…RVVVALPQEI (74 aa).

This sequence belongs to the RimM family. In terms of assembly, binds ribosomal protein uS19.

It localises to the cytoplasm. Functionally, an accessory protein needed during the final step in the assembly of 30S ribosomal subunit, possibly for assembly of the head region. Essential for efficient processing of 16S rRNA. May be needed both before and after RbfA during the maturation of 16S rRNA. It has affinity for free ribosomal 30S subunits but not for 70S ribosomes. This chain is Ribosome maturation factor RimM, found in Bradyrhizobium diazoefficiens (strain JCM 10833 / BCRC 13528 / IAM 13628 / NBRC 14792 / USDA 110).